A 137-amino-acid polypeptide reads, in one-letter code: Large ribosomal subunit protein uL22 (137 aa).

Belongs to the universal ribosomal protein uL22 family. Part of the 50S ribosomal subunit.

In terms of biological role, this protein binds specifically to 23S rRNA; its binding is stimulated by other ribosomal proteins, e.g. L4, L17, and L20. It is important during the early stages of 50S assembly. It makes multiple contacts with different domains of the 23S rRNA in the assembled 50S subunit and ribosome. Its function is as follows. The globular domain of the protein is located near the polypeptide exit tunnel on the outside of the subunit, while an extended beta-hairpin is found that lines the wall of the exit tunnel in the center of the 70S ribosome. The protein is Large ribosomal subunit protein uL22 of Flavobacterium psychrophilum (strain ATCC 49511 / DSM 21280 / CIP 103535 / JIP02/86).